The chain runs to 304 residues: Small ribosomal subunit protein uS2 (304 aa).

Ser-2 is subject to N-acetylserine. Laminin-binding regions lie at residues 161–180 (IPCN…MLAR) and 205–229 (RDPE…EFQG). [DE]-W-[ST] repeat units follow at residues 230–232 (EWS), 245–247 (DWS), 275–277 (DWS), 284–286 (DWS), and 302–304 (DWS). The segment at 242–304 (EVADWSEGVA…DWGGATSDWS (63 aa)) is laminin-binding. Residues 257-304 (IQQFPAGTPAPAPAVKTEDWSTQPATEDWSTAPTAQASDWGGATSDWS) form a disordered region. Polar residues predominate over residues 276 to 293 (WSTQPATEDWSTAPTAQA).

This sequence belongs to the universal ribosomal protein uS2 family. Monomer (37LRP) and homodimer (67LR). Component of the small ribosomal subunit. Mature ribosomes consist of a small (40S) and a large (60S) subunit. The 40S subunit contains about 33 different proteins and 1 molecule of RNA (18S). The 60S subunit contains about 49 different proteins and 3 molecules of RNA (28S, 5.8S and 5S). Interacts with rps21. Interacts with several laminins including at least lamb1. Interacts with mdk. In terms of processing, acylated. Acylation may be a prerequisite for conversion of the monomeric 37 kDa laminin receptor precursor (37LRP) to the mature dimeric 67 kDa laminin receptor (67LR), and may provide a mechanism for membrane association. Cleaved by stromelysin-3 (ST3) at the cell surface. Cleavage by stromelysin-3 may be a mechanism to alter cell-extracellular matrix interactions.

Its subcellular location is the cell membrane. The protein resides in the cytoplasm. It localises to the nucleus. Its function is as follows. Required for the assembly and/or stability of the 40S ribosomal subunit. Required for the processing of the 20S rRNA-precursor to mature 18S rRNA in a late step of the maturation of 40S ribosomal subunits. Also functions as a cell surface receptor for laminin. Plays a role in cell adhesion to the basement membrane and in the consequent activation of signaling transduction pathways. May play a role in cell fate determination and tissue morphogenesis. The chain is Small ribosomal subunit protein uS2 (rpsa) from Sparus aurata (Gilthead sea bream).